Reading from the N-terminus, the 125-residue chain is Lymphocyte antigen 6 complex locus protein G6c (125 aa).

The N-terminal stretch at 1-18 (MKALMLLTLSVLLCWVSA) is a signal peptide. The UPAR/Ly6 domain occupies 20 to 111 (IRCHSCYKVP…PRPTPALGLV (92 aa)). Intrachain disulfides connect Cys-22/Cys-47, Cys-25/Cys-33, and Cys-39/Cys-65. N-linked (GlcNAc...) asparagine glycosylation is present at Asn-88. Cys-92 and Cys-97 form a disulfide bridge. Residue Ser-99 is the site of GPI-anchor amidated serine attachment. The propeptide at 100–125 (AGPRPTPALGLVFLTSLAGLGLWLLH) is removed in mature form.

As to quaternary structure, monomer. N-glycosylated. As to expression, highly expressed at the leading edges of cells, on filopodia.

The protein resides in the cell membrane. The chain is Lymphocyte antigen 6 complex locus protein G6c (LY6G6C) from Homo sapiens (Human).